The sequence spans 292 residues: 4-hydroxy-tetrahydrodipicolinate synthase (292 aa).

T45 lines the pyruvate pocket. Residue Y133 is the Proton donor/acceptor of the active site. Residue K162 is the Schiff-base intermediate with substrate of the active site. Residue I204 participates in pyruvate binding.

Belongs to the DapA family. As to quaternary structure, homotetramer; dimer of dimers.

It is found in the cytoplasm. It carries out the reaction L-aspartate 4-semialdehyde + pyruvate = (2S,4S)-4-hydroxy-2,3,4,5-tetrahydrodipicolinate + H2O + H(+). Its pathway is amino-acid biosynthesis; L-lysine biosynthesis via DAP pathway; (S)-tetrahydrodipicolinate from L-aspartate: step 3/4. Functionally, catalyzes the condensation of (S)-aspartate-beta-semialdehyde [(S)-ASA] and pyruvate to 4-hydroxy-tetrahydrodipicolinate (HTPA). This is 4-hydroxy-tetrahydrodipicolinate synthase from Oleidesulfovibrio alaskensis (strain ATCC BAA-1058 / DSM 17464 / G20) (Desulfovibrio alaskensis).